We begin with the raw amino-acid sequence, 959 residues long: Protein SEY1 homolog 1 (959 aa).

Residues 1–767 (MQESDVFHNQ…ELAAITVHSK (767 aa)) lie on the Cytoplasmic side of the membrane. Residues 9–86 (NQLRVEMLKK…EEEKKEKENY (78 aa)) adopt a coiled-coil conformation. The tract at residues 62–81 (EEKENMKVEEEEIKEEEEKK) is disordered. Residues 123 to 340 (GFNYNMLSIL…NQNTYFRPIY (218 aa)) enclose the GB1/RHD3-type G domain. A GTP-binding site is contributed by 133–140 (GPQNSGKS). A helical transmembrane segment spans residues 768–788 (TPMWLILLIAFLSFDNIVYVF). The Lumenal segment spans residues 789 to 791 (KSP). The chain crosses the membrane as a helical span at residues 792 to 812 (TLLALTLIIIGIIYSLNKIGY). The Cytoplasmic portion of the chain corresponds to 813–959 (AYLIDSVISY…LNKIKEANEF (147 aa)). The segment at 849 to 868 (EAPKRKRPQKKTQDDKPKSS) is disordered.

The protein belongs to the TRAFAC class dynamin-like GTPase superfamily. GB1/RHD3 GTPase family. RHD3 subfamily.

The protein resides in the endoplasmic reticulum membrane. Probable GTP-binding protein that may be involved in cell development. This chain is Protein SEY1 homolog 1, found in Entamoeba histolytica (strain ATCC 30459 / HM-1:IMSS / ABRM).